A 220-amino-acid chain; its full sequence is Protein GrpE (220 aa).

Residues 1–22 (MSDEKNKFTDASFENCDLKNPS) form a disordered region.

It belongs to the GrpE family. As to quaternary structure, homodimer.

It is found in the cytoplasm. Its function is as follows. Participates actively in the response to hyperosmotic and heat shock by preventing the aggregation of stress-denatured proteins, in association with DnaK and GrpE. It is the nucleotide exchange factor for DnaK and may function as a thermosensor. Unfolded proteins bind initially to DnaJ; upon interaction with the DnaJ-bound protein, DnaK hydrolyzes its bound ATP, resulting in the formation of a stable complex. GrpE releases ADP from DnaK; ATP binding to DnaK triggers the release of the substrate protein, thus completing the reaction cycle. Several rounds of ATP-dependent interactions between DnaJ, DnaK and GrpE are required for fully efficient folding. In Bartonella henselae (strain ATCC 49882 / DSM 28221 / CCUG 30454 / Houston 1) (Rochalimaea henselae), this protein is Protein GrpE.